Reading from the N-terminus, the 1010-residue chain is Antigenic heat-stable 120 kDa protein (1010 aa).

Disordered stretches follow at residues 1-34 and 347-396; these read DTSEFDPLANKEYTEEQKQTLEQEQKEFLSQTTT and GQSK…QSQQ. Residues 12–27 show a composition bias toward basic and acidic residues; sequence EYTEEQKQTLEQEQKE. 2 stretches are compositionally biased toward polar residues: residues 347-372 and 379-396; these read GQSKEQPLITPQQTTSSSVEPPQHKQ and PTNQPLQPETSQMPQSQQ.

Its subcellular location is the cytoplasm. The chain is Antigenic heat-stable 120 kDa protein (sca4) from Rickettsia parkeri.